We begin with the raw amino-acid sequence, 252 residues long: Mitochondrial cardiolipin hydrolase (252 aa).

The Mitochondrial intermembrane segment spans residues 1–4 (MGRL). A required for mitochondrial localization region spans residues 1 to 39 (MGRLSWQVAAAAAVGLALTLEALPWVLRWLRSRRRRPRR). Residues 5-27 (SWQVAAAAAVGLALTLEALPWVL) form a helical membrane-spanning segment. Topologically, residues 28-252 (RWLRSRRRRP…TCGTSSESQT (225 aa)) are cytoplasmic. The C3H1-type; atypical zinc finger occupies 45-78 (PSQVTCTEALLRAPGAELAELPEGCPCGLPHGES). Residues 151–178 (DPGYMHHKFAIVDKRVLITGSLNWTTQA) enclose the PLD phosphodiesterase domain. Residues histidine 156, lysine 158, and aspartate 163 contribute to the active site.

This sequence belongs to the phospholipase D family. MitoPLD/Zucchini subfamily. In terms of assembly, homodimer. Interacts with MOV10L1. Interacts with MIGA1 and MIGA2; possibly facilitating homodimer formation. Interacts with GK2. Predominantly expressed in testis and ovary, but not limited to gonads (at protein level). It is also found in brain, heart, pituitary gland, prostate, pancreas, thyroid, bone marrow, lung and muscle.

It is found in the mitochondrion outer membrane. The protein localises to the golgi apparatus. The catalysed reaction is a cardiolipin + H2O = a 1,2-diacyl-sn-glycero-3-phospho-(1'-sn-glycerol) + a 1,2-diacyl-sn-glycero-3-phosphate + H(+). With respect to regulation, MYC stimulates its phospholipase activity. MIGA1 and MIGA2 increase PLD6 self-association affinity and affects the homodimer conformation facilitating its phospholipase activity over the nuclease activity. Single stranded DNA (ssDNA) hydrolase activity does not depend upon, but is stimulated by the presence of Ca(2+) and Mn(2+). Functionally, presents phospholipase and nuclease activities, depending on the different physiological conditions. Interaction with Mitoguardin (MIGA1 or MIGA2) affects the dimer conformation, facilitating the lipase activity over the nuclease activity. Plays a key role in mitochondrial fusion and fission via its phospholipase activity. In its phospholipase role, it uses the mitochondrial lipid cardiolipin as substrate to generate phosphatidate (PA or 1,2-diacyl-sn-glycero-3-phosphate), a second messenger signaling lipid. Production of PA facilitates Mitofusin-mediated fusion, whereas the cleavage of PA by the Lipin family of phosphatases produces diacylgycerol (DAG) which promotes mitochondrial fission. Both Lipin and DAG regulate mitochondrial dynamics and membrane fusion/fission, important processes for adapting mitochondrial metabolism to changes in cell physiology. Mitochondrial fusion enables cells to cope with the increased nucleotide demand during DNA synthesis. Mitochondrial function and dynamics are closely associated with biological processes such as cell growth, proliferation, and differentiation. Mediator of MYC activity, promotes mitochondrial fusion and activates AMPK which in turn inhibits YAP/TAZ, thereby inducing cell growth and proliferation. The endonuclease activity plays a critical role in PIWI-interacting RNA (piRNA) biogenesis during spermatogenesis. Implicated in spermatogenesis and sperm fertility in testicular germ cells, its single strand-specific nuclease activity is critical for the biogenesis/maturation of PIWI-interacting RNA (piRNA). MOV10L1 selectively binds to piRNA precursors and funnels them to the endonuclease that catalyzes the first cleavage step of piRNA processing to generate piRNA intermediate fragments that are subsequently loaded to Piwi proteins. Cleaves either DNA or RNA substrates with similar affinity, producing a 5' phosphate end, in this way it participates in the processing of primary piRNA transcripts. piRNAs provide essential protection against the activity of mobile genetic elements. piRNA-mediated transposon silencing is thus critical for maintaining genome stability, in particular in germline cells when transposons are mobilized as a consequence of wide-spread genomic demethylation. PA may act as signaling molecule in the recognition/transport of the precursor RNAs of primary piRNAs. Interacts with tesmin in testes, suggesting a role in spermatogenesis via association with its interacting partner. This chain is Mitochondrial cardiolipin hydrolase (PLD6), found in Homo sapiens (Human).